The chain runs to 338 residues: Inositol 2-dehydrogenase (338 aa).

This sequence belongs to the Gfo/Idh/MocA family. As to quaternary structure, homotetramer.

The catalysed reaction is myo-inositol + NAD(+) = scyllo-inosose + NADH + H(+). Its function is as follows. Involved in the oxidation of myo-inositol (MI) to 2-keto-myo-inositol (2KMI or 2-inosose). In Azotobacter vinelandii (strain DJ / ATCC BAA-1303), this protein is Inositol 2-dehydrogenase.